We begin with the raw amino-acid sequence, 669 residues long: Cytokinesis protein 2 (669 aa).

An F-BAR domain is found at 1 to 261; sequence MSYSYEACFW…HLNSFTAADE (261 aa). Residues 134-200 adopt a coiled-coil conformation; it reads KKGCEVLQKK…LKQEYKASQK (67 aa). Ser337 and Ser366 each carry phosphoserine. The interval 372–518 is disordered; sequence VQLQSNVDDS…DYNTRRDTST (147 aa). Composition is skewed to basic and acidic residues over residues 381-391 and 397-413; these read SVLRQKPDKPR and EQLK…EKGL. Position 421 is a phosphoserine (Ser421). Composition is skewed to low complexity over residues 421–431 and 445–455; these read SLSSPSESSSS and MESMTTSVSSM. Residues 599–667 form the SH3 domain; it reads PVIEYAKAMY…PYNFIQLLHQ (69 aa).

In terms of assembly, interacts with INN1.

Its subcellular location is the cytoplasm. It is found in the cytoskeleton. The protein resides in the bud neck. Functionally, throughout most of the cell cycle it forms a double ring that coincides with the septins. After the onset of mitosis, forms a ring-like structure which colocalizes with the medial actin ring. Mediates cytoskeletal rearrangements required for cytokinesis. In conjunction with the medial actin ring exhibits contraction-like action. The protein is Cytokinesis protein 2 (HOF1) of Saccharomyces cerevisiae (strain ATCC 204508 / S288c) (Baker's yeast).